Consider the following 179-residue polypeptide: Large ribosomal subunit protein uL5 (179 aa).

Belongs to the universal ribosomal protein uL5 family. Part of the 50S ribosomal subunit; part of the 5S rRNA/L5/L18/L25 subcomplex. Contacts the 5S rRNA and the P site tRNA. Forms a bridge to the 30S subunit in the 70S ribosome.

This is one of the proteins that bind and probably mediate the attachment of the 5S RNA into the large ribosomal subunit, where it forms part of the central protuberance. In the 70S ribosome it contacts protein S13 of the 30S subunit (bridge B1b), connecting the 2 subunits; this bridge is implicated in subunit movement. Contacts the P site tRNA; the 5S rRNA and some of its associated proteins might help stabilize positioning of ribosome-bound tRNAs. In Buchnera aphidicola subsp. Baizongia pistaciae (strain Bp), this protein is Large ribosomal subunit protein uL5.